The primary structure comprises 198 residues: Chromophore lyase CpcS/CpeS 2 (198 aa).

It belongs to the CpcS/CpeS biliprotein lyase family.

The protein localises to the plastid. Its subcellular location is the organellar chromatophore. Its function is as follows. Covalently attaches a chromophore to Cys residue(s) of phycobiliproteins. The polypeptide is Chromophore lyase CpcS/CpeS 2 (Paulinella chromatophora).